Reading from the N-terminus, the 77-residue chain is Conotoxin Bt6.6 (77 aa).

The first 19 residues, 1–19, serve as a signal peptide directing secretion; that stretch reads MEKLTILLLVAAVLMSTQA. The propeptide occupies 20–38; it reads LIQSDGEKRQQAKINFLSX. 3 disulfides stabilise this stretch: Cys51-Cys65, Cys58-Cys69, and Cys64-Cys74.

It belongs to the conotoxin O2 superfamily. Expressed by the venom duct.

Its subcellular location is the secreted. The sequence is that of Conotoxin Bt6.6 from Conus betulinus (Beech cone).